The following is a 96-amino-acid chain: Large ribosomal subunit protein bL27 (96 aa).

Residues 1-9 (MLRLDLQFF) constitute a propeptide that is removed on maturation.

Belongs to the bacterial ribosomal protein bL27 family. In terms of processing, the N-terminus is cleaved by ribosomal processing cysteine protease Prp.

The chain is Large ribosomal subunit protein bL27 from Anoxybacillus flavithermus (strain DSM 21510 / WK1).